The chain runs to 491 residues: Lysine--tRNA ligase (491 aa).

Positions 398 and 405 each coordinate Mg(2+).

It belongs to the class-II aminoacyl-tRNA synthetase family. In terms of assembly, homodimer. Mg(2+) is required as a cofactor.

Its subcellular location is the cytoplasm. The enzyme catalyses tRNA(Lys) + L-lysine + ATP = L-lysyl-tRNA(Lys) + AMP + diphosphate. In Mycoplasmopsis synoviae (strain 53) (Mycoplasma synoviae), this protein is Lysine--tRNA ligase.